The primary structure comprises 514 residues: Putative thymidine phosphorylase (514 aa).

The protein belongs to the thymidine/pyrimidine-nucleoside phosphorylase family. Type 2 subfamily.

The enzyme catalyses thymidine + phosphate = 2-deoxy-alpha-D-ribose 1-phosphate + thymine. The sequence is that of Putative thymidine phosphorylase from Sphingopyxis alaskensis (strain DSM 13593 / LMG 18877 / RB2256) (Sphingomonas alaskensis).